The primary structure comprises 286 residues: Protein GrpE (286 aa).

Disordered stretches follow at residues 1–51 (MSED…ETTA) and 260–286 (VAAP…QPTT). 2 stretches are compositionally biased toward low complexity: residues 39-50 (QPSSTPQTPETT) and 271-286 (TEST…QPTT).

The protein belongs to the GrpE family. As to quaternary structure, homodimer.

Its subcellular location is the cytoplasm. Functionally, participates actively in the response to hyperosmotic and heat shock by preventing the aggregation of stress-denatured proteins, in association with DnaK and GrpE. It is the nucleotide exchange factor for DnaK and may function as a thermosensor. Unfolded proteins bind initially to DnaJ; upon interaction with the DnaJ-bound protein, DnaK hydrolyzes its bound ATP, resulting in the formation of a stable complex. GrpE releases ADP from DnaK; ATP binding to DnaK triggers the release of the substrate protein, thus completing the reaction cycle. Several rounds of ATP-dependent interactions between DnaJ, DnaK and GrpE are required for fully efficient folding. The sequence is that of Protein GrpE from Gloeothece citriformis (strain PCC 7424) (Cyanothece sp. (strain PCC 7424)).